The primary structure comprises 154 residues: Transcriptional repressor NrdR (154 aa).

Residues 3-34 fold into a zinc finger; the sequence is CPFCTHPDTRVADSRLMEERNAVRRRRHCPNC. Residues 49–139 enclose the ATP-cone domain; that stretch reads PAVIGPDKKR…LHKRFDNPAD (91 aa).

The protein belongs to the NrdR family. The cofactor is Zn(2+).

Functionally, negatively regulates transcription of bacterial ribonucleotide reductase nrd genes and operons by binding to NrdR-boxes. The chain is Transcriptional repressor NrdR from Neisseria meningitidis serogroup A / serotype 4A (strain DSM 15465 / Z2491).